We begin with the raw amino-acid sequence, 125 residues long: Holo-[acyl-carrier-protein] synthase (125 aa).

Residues aspartate 9 and glutamate 58 each contribute to the Mg(2+) site.

It belongs to the P-Pant transferase superfamily. AcpS family. Mg(2+) serves as cofactor.

The protein resides in the cytoplasm. It carries out the reaction apo-[ACP] + CoA = holo-[ACP] + adenosine 3',5'-bisphosphate + H(+). Functionally, transfers the 4'-phosphopantetheine moiety from coenzyme A to a Ser of acyl-carrier-protein. In Shewanella amazonensis (strain ATCC BAA-1098 / SB2B), this protein is Holo-[acyl-carrier-protein] synthase.